The primary structure comprises 1178 residues: DNA-directed RNA polymerase subunit beta' (1178 aa).

Zn(2+) contacts are provided by cysteine 60, cysteine 62, cysteine 75, and cysteine 78. Mg(2+)-binding residues include aspartate 450, aspartate 452, and aspartate 454. Residues cysteine 795, cysteine 869, cysteine 876, and cysteine 879 each contribute to the Zn(2+) site.

It belongs to the RNA polymerase beta' chain family. The RNAP catalytic core consists of 2 alpha, 1 beta, 1 beta' and 1 omega subunit. When a sigma factor is associated with the core the holoenzyme is formed, which can initiate transcription. It depends on Mg(2+) as a cofactor. Zn(2+) is required as a cofactor.

It carries out the reaction RNA(n) + a ribonucleoside 5'-triphosphate = RNA(n+1) + diphosphate. Its function is as follows. DNA-dependent RNA polymerase catalyzes the transcription of DNA into RNA using the four ribonucleoside triphosphates as substrates. This is DNA-directed RNA polymerase subunit beta' from Clostridium botulinum (strain Langeland / NCTC 10281 / Type F).